A 236-amino-acid chain; its full sequence is Small ribosomal subunit protein uS2c (236 aa).

It belongs to the universal ribosomal protein uS2 family.

The protein localises to the plastid. It is found in the chloroplast. The protein is Small ribosomal subunit protein uS2c (rps2) of Morus indica (Mulberry).